Consider the following 193-residue polypeptide: Ion-translocating oxidoreductase complex subunit A (193 aa).

6 helical membrane-spanning segments follow: residues 5–25 (LLLF…FLGL), 39–59 (MGMG…AWLI), 63–83 (ILIP…VIAV), 102–122 (LLGI…VALL), 134–154 (ALYG…FAAI), and 171–191 (AIAL…SGLV).

It belongs to the NqrDE/RnfAE family. The complex is composed of six subunits: RsxA, RsxB, RsxC, RsxD, RsxE and RsxG.

Its subcellular location is the cell inner membrane. In terms of biological role, part of a membrane-bound complex that couples electron transfer with translocation of ions across the membrane. Required to maintain the reduced state of SoxR. This chain is Ion-translocating oxidoreductase complex subunit A, found in Escherichia fergusonii (strain ATCC 35469 / DSM 13698 / CCUG 18766 / IAM 14443 / JCM 21226 / LMG 7866 / NBRC 102419 / NCTC 12128 / CDC 0568-73).